The following is a 524-amino-acid chain: Cytochrome P450 4F1 (524 aa).

A helical membrane pass occupies residues 15–35 (VAFPWQTLLLFGASWILAQIL). Residues Glu328 and Cys468 each coordinate heme.

It belongs to the cytochrome P450 family. The cofactor is heme. As to expression, expressed in liver.

It is found in the endoplasmic reticulum membrane. The protein localises to the microsome membrane. It catalyses the reaction (5Z,8Z,11Z,14Z)-eicosatetraenoate + reduced [NADPH--hemoprotein reductase] + O2 = 20-hydroxy-(5Z,8Z,11Z,14Z)-eicosatetraenoate + oxidized [NADPH--hemoprotein reductase] + H2O + H(+). The enzyme catalyses 5-hydroxy-(6E,8Z,11Z,14Z)-eicosatetraenoate + reduced [NADPH--hemoprotein reductase] + O2 = 5,20-dihydroxy-(6E,8Z,11Z,14Z)-eicosatetraenoate + oxidized [NADPH--hemoprotein reductase] + H2O + H(+). The catalysed reaction is 8-hydroxy-(5Z,9E,11Z,14Z)-eicosatetraenoate + reduced [NADPH--hemoprotein reductase] + O2 = 8,20-dihydroxy-(5Z,9E,11Z,14Z)-eicosatetraenoate + oxidized [NADPH--hemoprotein reductase] + H2O + H(+). It carries out the reaction leukotriene B4 + reduced [NADPH--hemoprotein reductase] + O2 = 20-hydroxy-leukotriene B4 + oxidized [NADPH--hemoprotein reductase] + H2O + H(+). It catalyses the reaction 6-trans-leukotriene B4 + reduced [NADPH--hemoprotein reductase] + O2 = 20-hydroxy-6-trans-leukotriene B4 + oxidized [NADPH--hemoprotein reductase] + H2O + H(+). The enzyme catalyses lipoxin A4 + reduced [NADPH--hemoprotein reductase] + O2 = 20-hydroxy-lipoxin A4 + oxidized [NADPH--hemoprotein reductase] + H2O + H(+). A cytochrome P450 monooxygenase involved in the metabolism of arachidonic acid and its oxygenated derivatives. Mechanistically, uses molecular oxygen inserting one oxygen atom into a substrate, and reducing the second into a water molecule, with two electrons provided by NADPH via cytochrome P450 reductase (CPR; NADPH-ferrihemoprotein reductase). Participates in the conversion of arachidonic acid to omega-hydroxyeicosatetraenoic acid (20-HETE), a signaling molecule acting both as vasoconstrictive and natriuretic with overall effect on arterial blood pressure. May play a role in the oxidative inactivation of eicosanoids, including both pro-inflammatory and anti-inflammatory mediators such as leukotriene B4 (LTB4), lipoxin A4 (LXA4), and several HETEs. In Rattus norvegicus (Rat), this protein is Cytochrome P450 4F1.